A 546-amino-acid polypeptide reads, in one-letter code: Hexose transporter HXT10 (546 aa).

Over 1–44 (MVSSSVSILGTSAKASTSLSRKDEIKLTPETREASLDIPYKPII) the chain is Cytoplasmic. Residues 45-65 (AYWTVMGLCLMIAFGGFIFGW) form a helical membrane-spanning segment. Over 66–100 (DTGTISGFINQTDFKRRFGELQRDGSFQLSDVRTG) the chain is Extracellular. An N-linked (GlcNAc...) asparagine glycan is attached at Asn-75. A helical transmembrane segment spans residues 101-121 (LIVGIFNIGCALGGLTLGRLG). Residues 122 to 127 (DIYGRK) are Cytoplasmic-facing. The helical transmembrane segment at 128 to 148 (IGLMCVILVYVVGIVIQIASS) threads the bilayer. At 149–158 (DKWYQYFIGR) the chain is on the extracellular side. Residues 159–179 (IVSGMGVGGVAVLSPTLISEI) form a helical membrane-spanning segment. At 180 to 185 (SPKHLR) the chain is on the cytoplasmic side. The chain crosses the membrane as a helical span at residues 186 to 206 (GTCVSFYQLMITLGIFLGYCT). Topologically, residues 207–220 (NYGTKKYSNSIQWR) are extracellular. A helical membrane pass occupies residues 221–241 (VPLGLCFAWAIFMVIGMVMVP). At 242–324 (ESPRYLVEKG…IQSLQQLTGC (83 aa)) the chain is on the cytoplasmic side. Residues 325 to 341 (NYFFYYGTTIFNAVGMQ) form a helical membrane-spanning segment. Residues 342-347 (DSFETS) lie on the Extracellular side of the membrane. Residues 348 to 365 (IVLGAVNFASTFVALYIV) form a helical membrane-spanning segment. The Cytoplasmic segment spans residues 366–372 (DKFGRRK). The chain crosses the membrane as a helical span at residues 373 to 393 (CLLWGSASMAICFVIFATVGV). At 394–415 (TRLWPQGKDQPSSQSAGNVMIV) the chain is on the extracellular side. Residues 416 to 436 (FTCFFIFSFAITWAPIAYVIV) form a helical membrane-spanning segment. At 437 to 453 (AETYPLRVKNRAMAIAV) the chain is on the cytoplasmic side. The helical transmembrane segment at 454–474 (GANWMWGFLIGFFTPFITRSI) threads the bilayer. Position 475 (Gly-475) is a topological domain, extracellular. Residues 476–496 (FSYGYVFMGCLIFSYFYVFFF) form a helical membrane-spanning segment. The Cytoplasmic segment spans residues 497–546 (VCETKGLTLEEVNEMYEERIKPWKSGGWIPSSRRTPQPTSSTPLVIVDSK).

Belongs to the major facilitator superfamily. Sugar transporter (TC 2.A.1.1) family.

The protein localises to the membrane. Its function is as follows. Probable glucose transporter. In Saccharomyces cerevisiae (strain ATCC 204508 / S288c) (Baker's yeast), this protein is Hexose transporter HXT10 (HXT10).